The primary structure comprises 204 residues: Small ribosomal subunit protein uS3 (204 aa).

The region spanning 37-105 (IRSYINESFK…NVEVNVVGVK (69 aa)) is the KH type-2 domain.

The protein belongs to the universal ribosomal protein uS3 family. Part of the 30S ribosomal subunit. Forms a tight complex with proteins S10 and S14.

Binds the lower part of the 30S subunit head. Binds mRNA in the 70S ribosome, positioning it for translation. This is Small ribosomal subunit protein uS3 from Wolbachia pipientis wMel.